Reading from the N-terminus, the 452-residue chain is MKKKVYTFGLASILGTASLFTPFMNNTASAETSQQKQEIQQKRSEVNSGIESKRKEIAKLQDEQKKLEGKIQELDKKALETSNKIEDKEKENKKTKKEVEALKKEIKETEKRIEERSKVIKNRVRSLQENGGSQNYLNVLLGAQSFGDFITRATAVSTIVDADKDLLDEQEKDKNKLEKAMSDLNTKLDEIQKTLADLKTLKSDLDKQLKEQANLSKQLQTKQAAAESELSDLKKEAGSLTKEEAALEQKLKEERAAAAAAAKAKEESATAEKSDSGSSSSSNSGSVSKSDGSSNSGSSSSKKSSSPSRNYSSGSVVSSNGNAIEAAISTGSSIVGRSPYKWGGGRSQADIDNRRFDCSSFVRWAYASAGVELGFGATTSTLVGKGRAVSASEMKRGDLVFFDTYKTNGHVGIYLGNGTFLNDNSSRGVSVDSMSNPYWKKAFNGVVRRVVE.

An N-terminal signal peptide occupies residues 1–30 (MKKKVYTFGLASILGTASLFTPFMNNTASA). Residues 28-38 (ASAETSQQKQE) are compositionally biased toward polar residues. Disordered stretches follow at residues 28 to 53 (ASAE…IESK) and 258 to 317 (AAAA…GSVV). 2 stretches are compositionally biased toward basic and acidic residues: residues 39–53 (IQQK…IESK) and 263–275 (KAKE…EKSD). Low complexity predominate over residues 276-317 (SGSSSSSNSGSVSKSDGSSNSGSSSSKKSSSPSRNYSSGSVV). A NlpC/P60 domain is found at 321-450 (GNAIEAAIST…KAFNGVVRRV (130 aa)). The Nucleophile role is filled by Cys358. His410 serves as the catalytic Proton acceptor. Asn422 is an active-site residue.

This sequence belongs to the peptidase C40 family.

It is found in the secreted. Its function is as follows. Shows a cell wall hydrolytic DL-endopeptidase activity. The chain is Peptidoglycan DL-endopeptidase CwlO (cwlO) from Bacillus licheniformis (strain ATCC 14580 / DSM 13 / JCM 2505 / CCUG 7422 / NBRC 12200 / NCIMB 9375 / NCTC 10341 / NRRL NRS-1264 / Gibson 46).